A 563-amino-acid chain; its full sequence is 3-oxosteroid 1-dehydrogenase (563 aa).

7–36 (DVVVVGSGAAGMVAALVAAHRGLSTVVVEK) is a binding site for FAD.

The protein belongs to the FAD-dependent oxidoreductase 2 family. 3-oxosteroid dehydrogenase subfamily. The cofactor is FAD.

The enzyme catalyses a 3-oxosteroid + A = a 3-oxo-Delta(1)-steroid + AH2. The catalysed reaction is a 3-oxo-Delta(4)-steroid + A = a 3-oxo-Delta(1,4)-steroid + AH2. It carries out the reaction 3-oxochol-4-en-22-oyl-CoA + NAD(+) = 3-oxochola-1,4-dien-22-oyl-CoA + NADH + H(+). Its function is as follows. Involved in the degradation of cholesterol. Catalyzes the elimination of the C-1 and C-2 hydrogen atoms of the A-ring from the polycyclic ring structure of 3-ketosteroids. Has a clear preference for 3-ketosteroids with a saturated A-ring, displaying highest activity on 5alpha-AD (5alpha-androstane-3,17-dione) and 5alpha-T (5alpha-testosterone, also known as 17beta-hydroxy-5alpha-androstane-3-one). Is also involved in the formation of 3-keto-1,4-diene-steroid from 3-keto-4-ene-steroid. Catalyzes the conversion of 3-oxo-23,24-bisnorchol-4-en-22-oyl-coenzyme A thioester (4-BNC-CoA) to 3-oxo-23,24-bisnorchola-1,4-dien-22-oyl-coenzyme A thioester (1,4-BNC-CoA). In Mycobacterium tuberculosis (strain ATCC 25618 / H37Rv), this protein is 3-oxosteroid 1-dehydrogenase (kstD).